We begin with the raw amino-acid sequence, 546 residues long: Cytochrome P450 monooxygenase gloP (546 aa).

The helical transmembrane segment at 17 to 37 (TLSGGILTFLFIVVIAHFVLT) threads the bilayer. 3 N-linked (GlcNAc...) asparagine glycosylation sites follow: N189, N413, and N416. Heme is bound at residue C492.

Belongs to the cytochrome P450 family. Requires heme as cofactor.

Its subcellular location is the membrane. The protein operates within mycotoxin biosynthesis. Functionally, cytochrome P450 monooxygenase; part of the gene cluster that mediates the biosynthesis of pneumocandins, lipohexapeptides of the echinocandin family that prevent fungal cell wall formation by non-competitive inhibition of beta-1,3-glucan synthase. The 10,12-dimethylmyristoyl side chain is synthesized by the reducing polyketide synthase gloL/GLPKS4. The thioesterase gloN/GLHYD exclusively interacts with gloL/GLPKS4 to maintain turnover of the polyketide side chain. The 10R,12S-dimethylmyristic acid is then transferred to the first thiolation domain of the nonribosomal peptide synthetase gloA/GLNRPS4 by the acyl-AMP ligase gloD/GLligase, followed by its acylation to L-ornithine to trigger elongation of the cyclic hexapeptide. L-ornithine, 4R-hydroxyl-L-proline (generated from L-proline by the dioxygenase gloF/GLOXY2), 3S-hydroxyl-L-homotyrosine (generated by gloG/GLHtyB, gloH/GLHtyA, gloI/GLHtyC, gloJ/GLHtyD and hydroxylated at C-3 by the dioxygenase gloM/GLOXY1), 3R-hydroxyl-L-glutamine (generated from L-glutamine probably by the dioxygenase gloE/GLOXY3) and 3S-hydroxyl-L-proline (generated from L-proline by the dioxygenase gloF/GLOXY2 to yield pneumocandin B0), or 3S-hydroxyl-4S-methyl-L-proline (generated from L-leucine by the dioxygenase gloC/GLOXY4 to yield pneumocandin A0) are sequentially added to the growing chain. The last C domain of gloA/GLNRPS4 is proposed to be responsible for cyclization by condensation to form the peptide bond between L-ornithine and 3S-hydroxyl-4S-methyl-L-proline (for pneumocandin A0) or 3S-hydroxyl-L-proline (for pneumocandin B0). Finally, the subsequent C-4 hydroxylation of 3S-hydroxyl-L-homotyrosine and L-ornithine dihydroxylation at C-4 and C-5 are performed by the cytochrome P450 monooxygenases gloP/GLP450-1 and gloO/GLP450-2, respectively. The chain is Cytochrome P450 monooxygenase gloP from Glarea lozoyensis (strain ATCC 20868 / MF5171).